A 243-amino-acid polypeptide reads, in one-letter code: 35 kDa gas vesicle protein (243 aa).

Belongs to the gas vesicle GvpC family.

The protein resides in the gas vesicle shell. Functionally, may confer stability to the gas vesicle shells. Gas vesicles are small, hollow, gas filled protein structures that are found in several microbial planktonic microorganisms. They allow the positioning of the organism at the favorable depth for growth. The chain is 35 kDa gas vesicle protein from Dactylococcopsis salina (strain PCC 8305) (Myxobactron salinum).